Here is a 402-residue protein sequence, read N- to C-terminus: Phosphopentomutase (402 aa).

Mn(2+) is bound by residues Asp10, Asp301, His306, Asp342, His343, and His354.

It belongs to the phosphopentomutase family. The cofactor is Mn(2+).

It localises to the cytoplasm. It catalyses the reaction 2-deoxy-alpha-D-ribose 1-phosphate = 2-deoxy-D-ribose 5-phosphate. The catalysed reaction is alpha-D-ribose 1-phosphate = D-ribose 5-phosphate. It participates in carbohydrate degradation; 2-deoxy-D-ribose 1-phosphate degradation; D-glyceraldehyde 3-phosphate and acetaldehyde from 2-deoxy-alpha-D-ribose 1-phosphate: step 1/2. Its function is as follows. Isomerase that catalyzes the conversion of deoxy-ribose 1-phosphate (dRib-1-P) and ribose 1-phosphate (Rib-1-P) to deoxy-ribose 5-phosphate (dRib-5-P) and ribose 5-phosphate (Rib-5-P), respectively. This is Phosphopentomutase from Aeromonas hydrophila subsp. hydrophila (strain ATCC 7966 / DSM 30187 / BCRC 13018 / CCUG 14551 / JCM 1027 / KCTC 2358 / NCIMB 9240 / NCTC 8049).